The primary structure comprises 554 residues: DNA gyrase subunit A (554 aa).

The Topo IIA-type catalytic domain occupies 1–554 (RGIFRPDRSH…GMATNIPPHN (554 aa)). Tyr69 acts as the O-(5'-phospho-DNA)-tyrosine intermediate in catalysis. A DOD-type homing endonuclease domain is found at 195 to 335 (HLGAFISEGF…IQQMLLEFGV (141 aa)).

The protein belongs to the type II topoisomerase GyrA/ParC subunit family. As to quaternary structure, heterotetramer, composed of two GyrA and two GyrB chains. In the heterotetramer, GyrA contains the active site tyrosine that forms a transient covalent intermediate with DNA, while GyrB binds cofactors and catalyzes ATP hydrolysis. Post-translationally, this protein undergoes a protein self splicing that involves a post-translational excision of the intervening region (intein) followed by peptide ligation.

The protein localises to the cytoplasm. It carries out the reaction ATP-dependent breakage, passage and rejoining of double-stranded DNA.. Its function is as follows. A type II topoisomerase that negatively supercoils closed circular double-stranded (ds) DNA in an ATP-dependent manner to modulate DNA topology and maintain chromosomes in an underwound state. Negative supercoiling favors strand separation, and DNA replication, transcription, recombination and repair, all of which involve strand separation. Also able to catalyze the interconversion of other topological isomers of dsDNA rings, including catenanes and knotted rings. Type II topoisomerases break and join 2 DNA strands simultaneously in an ATP-dependent manner. This Mycolicibacterium flavescens (Mycobacterium flavescens) protein is DNA gyrase subunit A (gyrA).